The primary structure comprises 384 residues: Spermidine/putrescine import ATP-binding protein PotA (384 aa).

Positions 6–238 constitute an ABC transporter domain; it reads IAFKNVSKVF…PINHFVATFI (233 aa). 40–47 contacts ATP; that stretch reads GASGSGKS.

Belongs to the ABC transporter superfamily. Spermidine/putrescine importer (TC 3.A.1.11.1) family. The complex is composed of two ATP-binding proteins (PotA), two transmembrane proteins (PotB and PotC) and a solute-binding protein (PotD).

Its subcellular location is the cell membrane. It carries out the reaction ATP + H2O + polyamine-[polyamine-binding protein]Side 1 = ADP + phosphate + polyamineSide 2 + [polyamine-binding protein]Side 1.. Its function is as follows. Part of the ABC transporter complex PotABCD involved in spermidine/putrescine import. Responsible for energy coupling to the transport system. In Streptococcus agalactiae serotype Ia (strain ATCC 27591 / A909 / CDC SS700), this protein is Spermidine/putrescine import ATP-binding protein PotA.